A 630-amino-acid chain; its full sequence is tRNA uridine 5-carboxymethylaminomethyl modification enzyme MnmG (630 aa).

Residue 13–18 (GGGHAG) coordinates FAD. 273–287 (GPRYCPSIEDKIHRF) contributes to the NAD(+) binding site.

The protein belongs to the MnmG family. In terms of assembly, homodimer. Heterotetramer of two MnmE and two MnmG subunits. Requires FAD as cofactor.

It is found in the cytoplasm. Functionally, NAD-binding protein involved in the addition of a carboxymethylaminomethyl (cmnm) group at the wobble position (U34) of certain tRNAs, forming tRNA-cmnm(5)s(2)U34. The sequence is that of tRNA uridine 5-carboxymethylaminomethyl modification enzyme MnmG from Pseudomonas putida (Arthrobacter siderocapsulatus).